Consider the following 177-residue polypeptide: B-phycoerythrin beta chain (177 aa).

Residues C50 and C61 each coordinate (2R,3E)-phycoerythrobilin. N72 is subject to N4-methylasparagine. 2 residues coordinate (2R,3E)-phycoerythrobilin: C82 and C158.

Belongs to the phycobiliprotein family. As to quaternary structure, heterotetramer of one alpha-1, one alpha-2, and two beta chains. Contains three covalently linked bilin chromophores.

It is found in the plastid. The protein localises to the chloroplast thylakoid membrane. Its function is as follows. Light-harvesting photosynthetic bile pigment-protein from the phycobiliprotein complex. This is B-phycoerythrin beta chain (cpeB) from Guillardia theta (Cryptophyte).